Consider the following 56-residue polypeptide: Zinc finger mu-protein HVO_0758 (56 aa).

The Zn(2+) site is built by Cys23, Cys26, Cys45, and Cys48. 2 consecutive short sequence motifs (c(P)XCG motif) follow at residues 23-27 (CSECG) and 45-49 (CADCG).

In terms of assembly, monomer.

Its function is as follows. Zinc-binding protein that binds one zinc ion. Is involved in biofilm formation, swarming and glycerol metabolism regulation. The sequence is that of Zinc finger mu-protein HVO_0758 from Haloferax volcanii (strain ATCC 29605 / DSM 3757 / JCM 8879 / NBRC 14742 / NCIMB 2012 / VKM B-1768 / DS2) (Halobacterium volcanii).